Reading from the N-terminus, the 263-residue chain is Small ribosomal subunit protein uS2 (263 aa).

Belongs to the universal ribosomal protein uS2 family. In terms of assembly, component of the small ribosomal subunit. Mature ribosomes consist of a small (40S) and a large (60S) subunit. The 40S subunit contains about 33 different proteins and 1 molecule of RNA (18S). The 60S subunit contains about 49 different proteins and 3 molecules of RNA (25S, 5.8S and 5S). Interacts with RPS21.

The protein resides in the cytoplasm. Its function is as follows. Required for the assembly and/or stability of the 40S ribosomal subunit. Required for the processing of the 20S rRNA-precursor to mature 18S rRNA in a late step of the maturation of 40S ribosomal subunits. The sequence is that of Small ribosomal subunit protein uS2 from Vairimorpha ceranae (strain BRL01) (Microsporidian parasite).